Reading from the N-terminus, the 508-residue chain is Steroid 17-alpha-hydroxylase/17,20 lyase (508 aa).

Residue asparagine 202 participates in substrate binding. Cysteine 442 lines the heme pocket.

It belongs to the cytochrome P450 family. Heme serves as cofactor.

It is found in the endoplasmic reticulum membrane. The protein localises to the microsome membrane. It carries out the reaction a C21-steroid + reduced [NADPH--hemoprotein reductase] + O2 = a 17alpha-hydroxy-C21-steroid + oxidized [NADPH--hemoprotein reductase] + H2O + H(+). The enzyme catalyses progesterone + reduced [NADPH--hemoprotein reductase] + O2 = 17alpha-hydroxyprogesterone + oxidized [NADPH--hemoprotein reductase] + H2O + H(+). It catalyses the reaction pregnenolone + reduced [NADPH--hemoprotein reductase] + O2 = 17alpha-hydroxypregnenolone + oxidized [NADPH--hemoprotein reductase] + H2O + H(+). The catalysed reaction is 17alpha-hydroxyprogesterone + reduced [NADPH--hemoprotein reductase] + O2 = androst-4-ene-3,17-dione + acetate + oxidized [NADPH--hemoprotein reductase] + H2O + 2 H(+). It carries out the reaction 17alpha-hydroxyprogesterone + reduced [NADPH--hemoprotein reductase] + O2 = 16alpha,17alpha-dihydroxyprogesterone + oxidized [NADPH--hemoprotein reductase] + H2O + H(+). The enzyme catalyses 16alpha,17alpha-dihydroxyprogesterone + reduced [NADPH--hemoprotein reductase] + O2 = 6beta,16alpha,17alpha-trihydroxyprogesterone + oxidized [NADPH--hemoprotein reductase] + H2O + H(+). It catalyses the reaction 17alpha-hydroxypregnenolone + reduced [NADPH--hemoprotein reductase] + O2 = 3beta-hydroxyandrost-5-en-17-one + acetate + oxidized [NADPH--hemoprotein reductase] + H2O + 2 H(+). The catalysed reaction is 16alpha,17alpha-dihydroxypregnenolone + reduced [NADPH--hemoprotein reductase] + O2 = 3beta,16alpha-dihydroxy-androst-5-en-17-one + acetate + oxidized [NADPH--hemoprotein reductase] + H2O + 2 H(+). It carries out the reaction 3beta-hydroxyandrost-5-en-17-one + reduced [NADPH--hemoprotein reductase] + O2 = 3beta,16alpha-dihydroxy-androst-5-en-17-one + oxidized [NADPH--hemoprotein reductase] + H2O + H(+). The enzyme catalyses androst-4-ene-3,17-dione + reduced [NADPH--hemoprotein reductase] + O2 = 16alpha-hydroxyandrost-4-ene-3,17-dione + oxidized [NADPH--hemoprotein reductase] + H2O + H(+). Its pathway is steroid hormone biosynthesis. It participates in steroid biosynthesis; glucocorticoid biosynthesis. With respect to regulation, regulated predominantly by intracellular cAMP levels. The 17,20-lyase activity is stimulated by cytochrome b5, which acts as an allosteric effector increasing the Vmax of the lyase activity. Functionally, a cytochrome P450 monooxygenase involved in corticoid and androgen biosynthesis. Catalyzes 17-alpha hydroxylation of C21 steroids, which is common for both pathways. A second oxidative step, required only for androgen synthesis, involves an acyl-carbon cleavage. The 17-alpha hydroxy intermediates, as part of adrenal glucocorticoids biosynthesis pathway, are precursors of cortisol. Hydroxylates steroid hormones, pregnenolone and progesterone to form 17-alpha hydroxy metabolites, followed by the cleavage of the C17-C20 bond to form C19 steroids, dehydroepiandrosterone (DHEA) and androstenedione. Has 16-alpha hydroxylase activity. Catalyzes 16-alpha hydroxylation of 17-alpha hydroxy pregnenolone, followed by the cleavage of the C17-C20 bond to form 16-alpha-hydroxy DHEA. Also 16-alpha hydroxylates androgens, relevant for estriol synthesis. Mechanistically, uses molecular oxygen inserting one oxygen atom into a substrate, and reducing the second into a water molecule, with two electrons provided by NADPH via cytochrome P450 reductase (CPR; NADPH-ferrihemoprotein reductase). The polypeptide is Steroid 17-alpha-hydroxylase/17,20 lyase (CYP17A1) (Macaca fascicularis (Crab-eating macaque)).